Here is a 132-residue protein sequence, read N- to C-terminus: Small ribosomal subunit protein uS8 (132 aa).

Belongs to the universal ribosomal protein uS8 family. As to quaternary structure, part of the 30S ribosomal subunit. Contacts proteins S5 and S12.

Functionally, one of the primary rRNA binding proteins, it binds directly to 16S rRNA central domain where it helps coordinate assembly of the platform of the 30S subunit. This chain is Small ribosomal subunit protein uS8, found in Rickettsia massiliae (strain Mtu5).